The chain runs to 323 residues: tRNA dimethylallyltransferase (323 aa).

An ATP-binding site is contributed by 12-19 (GPTAAGKT). 14–19 (TAAGKT) lines the substrate pocket. Interaction with substrate tRNA regions lie at residues 37-40 (DSAL) and 161-165 (QRLMR).

Belongs to the IPP transferase family. As to quaternary structure, monomer. Requires Mg(2+) as cofactor.

It catalyses the reaction adenosine(37) in tRNA + dimethylallyl diphosphate = N(6)-dimethylallyladenosine(37) in tRNA + diphosphate. Catalyzes the transfer of a dimethylallyl group onto the adenine at position 37 in tRNAs that read codons beginning with uridine, leading to the formation of N6-(dimethylallyl)adenosine (i(6)A). In Pseudomonas aeruginosa (strain UCBPP-PA14), this protein is tRNA dimethylallyltransferase.